Reading from the N-terminus, the 128-residue chain is Anti-sigma-F factor antagonist RsfA (128 aa).

The STAS domain occupies 17 to 128 (LKATIQHHDS…PTTESALSAT (112 aa)). Cysteines 73 and 109 form a disulfide.

This sequence belongs to the anti-sigma-factor antagonist family. Monomer. Interacts with anti-sigma-F factor RsbW (UsfX).

Functionally, positive, redox-sensitive regulator of sigma-F (SigF) activity. When reduced binds to anti-sigma-F factor RsbW (UsfX) preventing its binding to SigF, thus activating transcription. This Mycobacterium tuberculosis (strain CDC 1551 / Oshkosh) protein is Anti-sigma-F factor antagonist RsfA (rsfA).